Here is a 474-residue protein sequence, read N- to C-terminus: Calcium/calmodulin-dependent protein kinase type IV (474 aa).

S11 and S12 each carry phosphoserine; by autocatalysis. Positions F42–V296 constitute a Protein kinase domain. Residues L48–V56 and K71 contribute to the ATP site. T53 is a glycosylation site (O-linked (GlcNAc) threonine). The O-linked (GlcNAc) serine glycan is linked to S54. The O-linked (GlcNAc) serine glycan is linked to S133. The Proton acceptor role is filled by D160. S185 carries O-linked (GlcNAc) serine glycosylation. T196 is subject to Phosphothreonine; by CaMKK1 and CaMKK2. The tract at residues T297–G336 is autoinhibitory domain. Positions N302–R319 are PP2A-binding. The calmodulin-binding stretch occupies residues A318–S337. The residue at position 332 (S332) is a Phosphoserine; by autocatalysis. Residues G336 to Y474 form a disordered region. Residue S337 is modified to Phosphoserine. O-linked (GlcNAc) serine glycans are attached at residues S340, S341, and S352. A compositionally biased stretch (polar residues) spans H342 to Q356. Basic and acidic residues predominate over residues D360–S392. Residues E393–E413 show a composition bias toward acidic residues. Basic and acidic residues predominate over residues Q431–E454. Phosphoserine is present on residues S437 and S443.

It belongs to the protein kinase superfamily. CAMK Ser/Thr protein kinase family. CaMK subfamily. Monomer. Interacts with protein phosphatase 2A (PPP2CA/PPP2CB); the interaction is mutually exclusive with binding to Ca(2+)/calmodulin. Post-translationally, phosphorylated by CaMKK1 and CaMKK2 on Thr-196. Dephosphorylated by protein phosphatase 2A. Autophosphorylated on Ser-11 and Ser-12. Glycosylation at Ser-185 modulates the phosphorylation of CaMK4 at Thr-196 and negatively regulates its activity toward CREB1 in basal conditions and during early inomycin stimulation. In terms of processing, the N-terminus of calspermin is blocked. As to expression, isoform 1 is expressed in brain and isoform 2 is testis specific.

It localises to the cytoplasm. Its subcellular location is the nucleus. The catalysed reaction is L-seryl-[protein] + ATP = O-phospho-L-seryl-[protein] + ADP + H(+). It catalyses the reaction L-threonyl-[protein] + ATP = O-phospho-L-threonyl-[protein] + ADP + H(+). Its activity is regulated as follows. Activated by Ca(2+)/calmodulin. Binding of calmodulin results in conformational change that relieves intrasteric autoinhibition and allows phosphorylation of Thr-196 within the activation loop by CaMKK1 or CaMKK2. Phosphorylation of Thr-196 results in a 10-20-fold increase in total activity to generate Ca(2+)/calmodulin-independent activity. Autophosphorylation of the N-terminus Ser-11 and Ser-12 is required for full activation. Inactivated by protein phosphatase 2A (PPP2CA/PPP2CB) which dephosphorylates Thr-196, thereby terminating autonomous activity and helping to maintain the enzyme in its autoinhibited state. Its function is as follows. Calcium/calmodulin-dependent protein kinase that operates in the calcium-triggered CaMKK-CaMK4 signaling cascade and regulates, mainly by phosphorylation, the activity of several transcription activators, such as CREB1, MEF2D, JUN and RORA, which play pivotal roles in immune response, inflammation, and memory consolidation. In the thymus, regulates the CD4(+)/CD8(+) double positive thymocytes selection threshold during T-cell ontogeny. In CD4 memory T-cells, is required to link T-cell antigen receptor (TCR) signaling to the production of IL2, IFNG and IL4 (through the regulation of CREB and MEF2). Regulates the differentiation and survival phases of osteoclasts and dendritic cells (DCs). Mediates DCs survival by linking TLR4 and the regulation of temporal expression of BCL2. Phosphorylates the transcription activator CREB1 on 'Ser-133' in hippocampal neuron nuclei and contribute to memory consolidation and long term potentiation (LTP) in the hippocampus. Can activate the MAP kinases MAPK1/ERK2, MAPK8/JNK1 and MAPK14/p38 and stimulate transcription through the phosphorylation of ELK1 and ATF2. Can also phosphorylate in vitro CREBBP, PRM2, MEF2A and STMN1/OP18. Heat-stable, acidic, calmodulin-binding protein. The sequence is that of Calcium/calmodulin-dependent protein kinase type IV (Camk4) from Rattus norvegicus (Rat).